The following is a 156-amino-acid chain: ATP synthase subunit b (156 aa).

A helical transmembrane segment spans residues 12–32 (VAFFIFVLFCMKFVWPPVIAA).

This sequence belongs to the ATPase B chain family. In terms of assembly, F-type ATPases have 2 components, F(1) - the catalytic core - and F(0) - the membrane proton channel. F(1) has five subunits: alpha(3), beta(3), gamma(1), delta(1), epsilon(1). F(0) has three main subunits: a(1), b(2) and c(10-14). The alpha and beta chains form an alternating ring which encloses part of the gamma chain. F(1) is attached to F(0) by a central stalk formed by the gamma and epsilon chains, while a peripheral stalk is formed by the delta and b chains.

It localises to the cell inner membrane. Functionally, f(1)F(0) ATP synthase produces ATP from ADP in the presence of a proton or sodium gradient. F-type ATPases consist of two structural domains, F(1) containing the extramembraneous catalytic core and F(0) containing the membrane proton channel, linked together by a central stalk and a peripheral stalk. During catalysis, ATP synthesis in the catalytic domain of F(1) is coupled via a rotary mechanism of the central stalk subunits to proton translocation. Its function is as follows. Component of the F(0) channel, it forms part of the peripheral stalk, linking F(1) to F(0). The chain is ATP synthase subunit b from Pseudomonas syringae pv. syringae (strain B728a).